A 182-amino-acid chain; its full sequence is Large ribosomal subunit protein uL5 (182 aa).

This sequence belongs to the universal ribosomal protein uL5 family. In terms of assembly, part of the 50S ribosomal subunit; part of the 5S rRNA/L5/L18/L25 subcomplex. Contacts the 5S rRNA and the P site tRNA. Forms a bridge to the 30S subunit in the 70S ribosome.

In terms of biological role, this is one of the proteins that bind and probably mediate the attachment of the 5S RNA into the large ribosomal subunit, where it forms part of the central protuberance. In the 70S ribosome it contacts protein S13 of the 30S subunit (bridge B1b), connecting the 2 subunits; this bridge is implicated in subunit movement. Contacts the P site tRNA; the 5S rRNA and some of its associated proteins might help stabilize positioning of ribosome-bound tRNAs. In Borrelia duttonii (strain Ly), this protein is Large ribosomal subunit protein uL5.